Here is a 307-residue protein sequence, read N- to C-terminus: Dof zinc finger protein DOF5.4 (307 aa).

Residues 51 to 105 form a Dof-type zinc finger; sequence LKCPRCNSLNTKFCYYNNYNLSQPRHFCKNCRRYWTKGGVLRNVPVGGGCRKAKR. 4 residues coordinate Zn(2+): cysteine 53, cysteine 56, cysteine 78, and cysteine 81. The interval 96 to 147 is disordered; that stretch reads VGGGCRKAKRSKTKQVPSSSSADKPTTTQDDHHVEEKSSTGSHSSSESSSLT. Positions 109–123 are enriched in polar residues; it reads KQVPSSSSADKPTTT. Basic and acidic residues predominate over residues 124 to 133; the sequence is QDDHHVEEKS. Over residues 134–147 the composition is skewed to low complexity; the sequence is STGSHSSSESSSLT.

It is found in the nucleus. Its function is as follows. Transcription factor that binds specifically to a 5'-AA[AG]G-3' consensus core sequence. Enhances the DNA binding of OBF transcription factors to OCS elements. This chain is Dof zinc finger protein DOF5.4 (DOF5.4), found in Arabidopsis thaliana (Mouse-ear cress).